The following is a 1077-amino-acid chain: Receptor-like protein 1 (1077 aa).

The signal sequence occupies residues 1–38 (MRTDERRRWWVKPKKHITLVFITITMIIQFQMKGCVSC). Residues 39–120 (VETERMGLLQ…SQTRSLNLSL (82 aa)) are N-cap. The Extracellular segment spans residues 39–1024 (VETERMGLLQ…NEEEGNVIDM (986 aa)). Residues Asn-117, Asn-131, and Asn-139 are each glycosylated (N-linked (GlcNAc...) asparagine). 12 LRR repeats span residues 124–147 (FPQL…FLGF), 153–176 (LDKL…FLNA), 177–201 (ATSI…ELSN), 202–225 (MTNL…GLTD), 227–250 (RDLE…SLST), 251–274 (AKLK…GLES), 275–299 (LQEL…VLKD), 300–324 (LKML…GLEI), 326–348 (TSLQ…YLGI), 351–376 (LMKL…NLTH), 378–397 (RTLD…FVSG), and 399–424 (PSVL…LVNQ). N-linked (GlcNAc...) asparagine glycosylation is present at Asn-201. Asn-240 carries N-linked (GlcNAc...) asparagine glycosylation. The N-linked (GlcNAc...) asparagine glycan is linked to Asn-289. N-linked (GlcNAc...) asparagine glycans are attached at residues Asn-373, Asn-390, and Asn-423. The LRR 13; degenerate repeat unit spans residues 425–449 (TRLTVFKLSSKVGVIQVQTESSWAP). LRR repeat units follow at residues 450–473 (LFQL…FLVH), 474–498 (QRDL…LVKN), 499–522 (NTRL…ILVH), 524–545 (LQVL…IGMV), 546–570 (FPNL…IGEM), 572–594 (SLQV…FLSG), 595–621 (CYSL…NLTG), 623–643 (VGLF…LLKS), 644–666 (KNLT…WIGR), 667–694 (ISRL…PWVE), 696–713 (MDIS…NVNF), 714–737 (PSLR…LFKA), 739–761 (GLEV…IDQT), 762–785 (SKLR…ICQL), 786–808 (SEVG…CFSK), 877–901 (LRYM…IGDL), 902–925 (QNIR…ISKL), 927–949 (GLES…LADL), and 951–970 (SLGY…PFKG). Asn-460 and Asn-498 each carry an N-linked (GlcNAc...) asparagine glycan. A glycan (N-linked (GlcNAc...) asparagine) is linked at Asn-553. N-linked (GlcNAc...) asparagine glycosylation is found at Asn-618, Asn-631, and Asn-645. N-linked (GlcNAc...) asparagine glycosylation is found at Asn-749 and Asn-771. Asn-908 carries an N-linked (GlcNAc...) asparagine glycan. N-linked (GlcNAc...) asparagine glycans are attached at residues Asn-956 and Asn-961. Residues 971–1024 (HLVTFDERSYIGNAHLCGLPTNKNCISQRVPEPPSVSTHAKEEENEEEGNVIDM) form a C-cap/acidic domain region. The helical transmembrane segment at 1025 to 1045 (VWFYWTCAAVYISTSLALFAF) threads the bilayer. Over 1046 to 1077 (LYIDSRWSREWFYRVDLCVHHILQFKRSSVCN) the chain is Cytoplasmic.

It belongs to the RLP family.

It localises to the cell membrane. In terms of biological role, involved in plant defense. Confers resistance to the bacterial pathogen Xanthomonas through recognition of the microbe-associated molecular pattern (MAMP) eMax. Functionality seems to depend on the presence of the receptor kinase SOBIR1 as an adapter protein. The chain is Receptor-like protein 1 from Arabidopsis thaliana (Mouse-ear cress).